Reading from the N-terminus, the 354-residue chain is Guanine nucleotide-binding protein G(i) subunit alpha-1 (354 aa).

Gly-2 carries N-myristoyl glycine lipidation. Cys-3 carries S-palmitoyl cysteine lipidation. Positions Arg-32–Phe-354 constitute a G-alpha domain. Positions Lys-35–Thr-48 are G1 motif. GTP-binding positions include Glu-43–Thr-48, Asp-150–Ser-151, and Leu-175–Arg-178. Position 47 (Ser-47) interacts with Mg(2+). Residues Asp-173–Thr-181 form a G2 motif region. Thr-181 contributes to the Mg(2+) binding site. Residues Phe-196–Arg-205 form a G3 motif region. GTP-binding positions include Asp-200–Gln-204, Asn-269–Asp-272, and Ala-326. The interval Ile-265–Asp-272 is G4 motif. Positions Thr-324–Thr-329 are G5 motif.

Belongs to the G-alpha family. G(i/o/t/z) subfamily. In terms of assembly, heterotrimeric G proteins are composed of 3 units; alpha, beta and gamma. The alpha chain contains the guanine nucleotide binding site. Part of a spindle orientation complex. Identified in complex with the beta subunit GNB1 and the gamma subunit GNG1. Identified in complex with the beta subunit GNB1 and the gamma subunit GNG2. GTP binding causes dissociation of the heterotrimer, liberating the individual subunits so that they can interact with downstream effector proteins. In terms of processing, myristoylation at Gly-2 is required for membrane anchoring before palmitoylation. Post-translationally, palmitoylation at Cys-3 varies with membrane lipid composition.

The protein localises to the nucleus. Its subcellular location is the cytoplasm. It is found in the cell membrane. It localises to the cytoskeleton. The protein resides in the microtubule organizing center. The protein localises to the centrosome. Its subcellular location is the cell cortex. It is found in the membrane. The catalysed reaction is GTP + H2O = GDP + phosphate + H(+). Its function is as follows. Guanine nucleotide-binding proteins (G proteins) function as transducers downstream of G protein-coupled receptors (GPCRs) in numerous signaling cascades. The alpha chain contains the guanine nucleotide binding site and alternates between an active, GTP-bound state and an inactive, GDP-bound state. Signaling by an activated GPCR promotes GDP release and GTP binding. The alpha subunit has a low GTPase activity that converts bound GTP to GDP, thereby terminating the signal. Both GDP release and GTP hydrolysis are modulated by numerous regulatory proteins. Signaling is mediated via effector proteins, such as adenylate cyclase. Inhibits adenylate cyclase activity, leading to decreased intracellular cAMP levels. Required for cortical dynein-dynactin complex recruitment during metaphase. This Oryzias latipes (Japanese rice fish) protein is Guanine nucleotide-binding protein G(i) subunit alpha-1 (gnai1).